The sequence spans 100 residues: Omega-hexatoxin-Asp2b (100 aa).

The N-terminal stretch at 1 to 23 (MKFSKLSITLAVILTQAVFVLCG) is a signal peptide. Positions 24 to 55 (MKNEDFMEKGLESNELHDAIKKPVNSGKPDTE) are excised as a propeptide. 3 disulfides stabilise this stretch: Cys60–Cys73, Cys66–Cys79, and Cys72–Cys84.

Belongs to the neurotoxin 15 family. 02 (omega-actx) subfamily. As to expression, expressed by the venom gland.

The protein localises to the secreted. Potent inhibitor of insect, but not mammalian, voltage-gated calcium channels (Cav). The polypeptide is Omega-hexatoxin-Asp2b (Atrax sp. (strain Illawarra) (Funnel-web spider)).